A 349-amino-acid polypeptide reads, in one-letter code: Serine/threonine-protein kinase SRK2A (349 aa).

Residues 12-268 form the Protein kinase domain; that stretch reads YELVKDIGSG…IQEIKNHEWF (257 aa). Residues 18 to 26 and Lys41 contribute to the ATP site; that span reads IGSGNFGVA. The Proton acceptor role is filled by Asp131. The interval 151-177 is activation loop; sequence DFGYSKSSLLHSQPKSTVGTPAYIAPE.

Belongs to the protein kinase superfamily. Ser/Thr protein kinase family.

The enzyme catalyses L-seryl-[protein] + ATP = O-phospho-L-seryl-[protein] + ADP + H(+). It carries out the reaction L-threonyl-[protein] + ATP = O-phospho-L-threonyl-[protein] + ADP + H(+). With respect to regulation, activated by osmotic stress and by abscisic acid (ABA). Activation by NaCl is dependent on ABA. In terms of biological role, involved in early responses to osmotic stress. This Physcomitrium patens (Spreading-leaved earth moss) protein is Serine/threonine-protein kinase SRK2A.